Reading from the N-terminus, the 270-residue chain is Protein ABHD14A (270 aa).

Residues 9-29 (LVVLGLVLLATVLLYLLLPSM) form a helical; Signal-anchor for type II membrane protein membrane-spanning segment. Asparagine 61 is a glycosylation site (N-linked (GlcNAc...) asparagine). Active-site charge relay system residues include serine 170 and aspartate 221. Asparagine 237 is a glycosylation site (N-linked (GlcNAc...) asparagine). Histidine 248 functions as the Charge relay system in the catalytic mechanism.

The protein belongs to the AB hydrolase superfamily. ABHD14 family.

The protein resides in the cytoplasm. It localises to the membrane. In terms of biological role, possible role in granule neuron development. The chain is Protein ABHD14A from Danio rerio (Zebrafish).